Here is a 99-residue protein sequence, read N- to C-terminus: Protein Tat (99 aa).

Residues Met1–Asn24 are interaction with human CREBBP. A transactivation region spans residues Met1–Gly48. Residues Cys22, Cys25, and Cys27 each contribute to the Zn(2+) site. The tract at residues Cys22–Cys37 is cysteine-rich. Lys28 is subject to N6-acetyllysine; by host PCAF. Residues Cys30, His33, Cys34, and Cys37 each contribute to the Zn(2+) site. The interval Phe38–Gly48 is core. Positions Gly48–Thr58 are enriched in basic residues. The tract at residues Gly48–Pro99 is disordered. The short motif at Arg49–Arg57 is the Nuclear localization signal, RNA-binding (TAR), and protein transduction element. An interaction with the host capping enzyme RNGTT region spans residues Arg49–Glu86. 2 positions are modified to N6-acetyllysine; by host EP300 and GCN5L2: Lys50 and Lys51. Arg52 bears the Asymmetric dimethylarginine; by host PRMT6 mark. The span at Ala60–Ser75 shows a compositional bias: polar residues. Lys71 participates in a covalent cross-link: Glycyl lysine isopeptide (Lys-Gly) (interchain with G-Cter in ubiquitin). The span at Thr77–Pro99 shows a compositional bias: basic and acidic residues.

This sequence belongs to the lentiviruses Tat family. As to quaternary structure, interacts with host CCNT1. Associates with the P-TEFb complex composed at least of Tat, P-TEFb (CDK9 and CCNT1), TAR RNA, RNA Pol II. Recruits the HATs CREBBP, TAF1/TFIID, EP300, PCAF and GCN5L2. Interacts with host KAT5/Tip60; this interaction targets the latter to degradation. Interacts with the host deacetylase SIRT1. Interacts with host capping enzyme RNGTT; this interaction stimulates RNGTT. Binds to host KDR, and to the host integrins ITGAV/ITGB3 and ITGA5/ITGB1. Interacts with host KPNB1/importin beta-1 without previous binding to KPNA1/importin alpha-1. Interacts with EIF2AK2. Interacts with host nucleosome assembly protein NAP1L1; this interaction may be required for the transport of Tat within the nucleus, since the two proteins interact at the nuclear rim. Interacts with host C1QBP/SF2P32; this interaction involves lysine-acetylated Tat. Interacts with the host chemokine receptors CCR2, CCR3 and CXCR4. Interacts with host DPP4/CD26; this interaction may trigger an anti-proliferative effect. Interacts with host LDLR. Interacts with the host extracellular matrix metalloproteinase MMP1. Interacts with host PRMT6; this interaction mediates Tat's methylation. Interacts with, and is ubiquitinated by MDM2/Hdm2. Interacts with host PSMC3 and HTATIP2. Interacts with STAB1; this interaction may overcome SATB1-mediated repression of IL2 and IL2RA (interleukin) in T cells by binding to the same domain than HDAC1. Interacts (when acetylated) with human CDK13, thereby increasing HIV-1 mRNA splicing and promoting the production of the doubly spliced HIV-1 protein Nef. Interacts with host TBP; this interaction modulates the activity of transcriptional pre-initiation complex. Interacts with host RELA. Interacts with host PLSCR1; this interaction negatively regulates Tat transactivation activity by altering its subcellular distribution. In terms of processing, asymmetrical arginine methylation by host PRMT6 seems to diminish the transactivation capacity of Tat and affects the interaction with host CCNT1. Post-translationally, acetylation by EP300, CREBBP, GCN5L2/GCN5 and PCAF regulates the transactivation activity of Tat. EP300-mediated acetylation of Lys-50 promotes dissociation of Tat from the TAR RNA through the competitive binding to PCAF's bromodomain. In addition, the non-acetylated Tat's N-terminus can also interact with PCAF. PCAF-mediated acetylation of Lys-28 enhances Tat's binding to CCNT1. Lys-50 is deacetylated by SIRT1. Polyubiquitination by host MDM2 does not target Tat to degradation, but activates its transactivation function and fosters interaction with CCNT1 and TAR RNA. In terms of processing, phosphorylated by EIF2AK2 on serine and threonine residues adjacent to the basic region important for TAR RNA binding and function. Phosphorylation of Tat by EIF2AK2 is dependent on the prior activation of EIF2AK2 by dsRNA.

It localises to the host nucleus. The protein resides in the host nucleolus. The protein localises to the host cytoplasm. Its subcellular location is the secreted. Its function is as follows. Transcriptional activator that increases RNA Pol II processivity, thereby increasing the level of full-length viral transcripts. Recognizes a hairpin structure at the 5'-LTR of the nascent viral mRNAs referred to as the transactivation responsive RNA element (TAR) and recruits the cyclin T1-CDK9 complex (P-TEFb complex) that will in turn hyperphosphorylate the RNA polymerase II to allow efficient elongation. The CDK9 component of P-TEFb and other Tat-activated kinases hyperphosphorylate the C-terminus of RNA Pol II that becomes stabilized and much more processive. Other factors such as HTATSF1/Tat-SF1, SUPT5H/SPT5, and HTATIP2 are also important for Tat's function. Besides its effect on RNA Pol II processivity, Tat induces chromatin remodeling of proviral genes by recruiting the histone acetyltransferases (HATs) CREBBP, EP300 and PCAF to the chromatin. This also contributes to the increase in proviral transcription rate, especially when the provirus integrates in transcriptionally silent region of the host genome. To ensure maximal activation of the LTR, Tat mediates nuclear translocation of NF-kappa-B by interacting with host RELA. Through its interaction with host TBP, Tat may also modulate transcription initiation. Tat can reactivate a latently infected cell by penetrating in it and transactivating its LTR promoter. In the cytoplasm, Tat is thought to act as a translational activator of HIV-1 mRNAs. In terms of biological role, extracellular circulating Tat can be endocytosed by surrounding uninfected cells via the binding to several surface receptors such as CD26, CXCR4, heparan sulfate proteoglycans (HSPG) or LDLR. Neurons are rarely infected, but they internalize Tat via their LDLR. Through its interaction with nuclear HATs, Tat is potentially able to control the acetylation-dependent cellular gene expression. Modulates the expression of many cellular genes involved in cell survival, proliferation or in coding for cytokines or cytokine receptors. Tat plays a role in T-cell and neurons apoptosis. Tat induced neurotoxicity and apoptosis probably contribute to neuroAIDS. Circulating Tat also acts as a chemokine-like and/or growth factor-like molecule that binds to specific receptors on the surface of the cells, affecting many cellular pathways. In the vascular system, Tat binds to ITGAV/ITGB3 and ITGA5/ITGB1 integrins dimers at the surface of endothelial cells and competes with bFGF for heparin-binding sites, leading to an excess of soluble bFGF. This chain is Protein Tat, found in Homo sapiens (Human).